A 271-amino-acid polypeptide reads, in one-letter code: Metal-staphylopine import system ATP-binding protein CntD (271 aa).

The region spanning 6-251 (VKHLTITDTW…PEHVYTKYLL (246 aa)) is the ABC transporter domain. 38 to 45 (GESGSGKS) is a binding site for ATP.

This sequence belongs to the ABC transporter superfamily. The complex is composed of two ATP-binding proteins (CntD and CntF), two transmembrane proteins (CntB and CntC) and a solute-binding protein (CntA).

The protein resides in the cell membrane. In terms of biological role, part of the ABC transporter complex CntABCDF (Opp1) involved in the uptake of metal in complex with the metallophore staphylopine (StP). May be involved in the import of a large array of divalent metals ions such as nickel, cobalt, zinc, copper and iron. Probably responsible for energy coupling to the transport system. The chain is Metal-staphylopine import system ATP-binding protein CntD from Staphylococcus aureus (strain Mu50 / ATCC 700699).